The sequence spans 137 residues: ATP synthase epsilon chain 1 (137 aa).

This sequence belongs to the ATPase epsilon chain family. In terms of assembly, F-type ATPases have 2 components, CF(1) - the catalytic core - and CF(0) - the membrane proton channel. CF(1) has five subunits: alpha(3), beta(3), gamma(1), delta(1), epsilon(1). CF(0) has three main subunits: a, b and c.

It is found in the cell inner membrane. Functionally, produces ATP from ADP in the presence of a proton gradient across the membrane. This is ATP synthase epsilon chain 1 (atpC1) from Ralstonia nicotianae (strain ATCC BAA-1114 / GMI1000) (Ralstonia solanacearum).